Reading from the N-terminus, the 371-residue chain is Glycerate kinase (371 aa).

The protein belongs to the glycerate kinase type-1 family.

The catalysed reaction is (R)-glycerate + ATP = (2R)-3-phosphoglycerate + ADP + H(+). The protein is Glycerate kinase (glxK) of Neisseria meningitidis serogroup B (strain ATCC BAA-335 / MC58).